A 308-amino-acid polypeptide reads, in one-letter code: Pantothenate kinase (308 aa).

93-100 (GSVAVGKS) contacts ATP.

The protein belongs to the prokaryotic pantothenate kinase family.

The protein localises to the cytoplasm. The enzyme catalyses (R)-pantothenate + ATP = (R)-4'-phosphopantothenate + ADP + H(+). Its pathway is cofactor biosynthesis; coenzyme A biosynthesis; CoA from (R)-pantothenate: step 1/5. In Corynebacterium aurimucosum (strain ATCC 700975 / DSM 44827 / CIP 107346 / CN-1) (Corynebacterium nigricans), this protein is Pantothenate kinase.